Reading from the N-terminus, the 426-residue chain is Flotillin-1 (426 aa).

The protein belongs to the band 7/mec-2 family. Flotillin subfamily. Heterooligomeric complex of flotillins 1 and 2 and caveolins 1 and 2. As to expression, expressed in brain and ventral nerve cord from stage 12-16 of embryogenesis.

It is found in the cell membrane. The protein localises to the membrane. Its subcellular location is the caveola. May act as a scaffolding protein within caveolar membranes, functionally participating in formation of caveolae or caveolae-like vesicles. The sequence is that of Flotillin-1 from Drosophila melanogaster (Fruit fly).